Reading from the N-terminus, the 293-residue chain is MEITFQKVEHRYQYKTPFERRALYDVDVSFPSGGYYAIIGHTGSGKSTMIQHLNGLLQPTNGTVQIGEHFISAGKKEKKLKLLRKKVGVVFQFPEHQLFEETVEKDICFGPTNFGVSEEAAKQKAREAIELVGLEPDLLARSPFELSGGQMRRVAIAGVLAMEPEVLVLDEPTAGLDPKGQNELMEMFYKLHKEKGLTVILVTHNMEDAAKYAEQIIVMHKGTVFLQGSAEEVFSHADELEKIGVDLPMSLKYKRAIEEKFGISIPKATLSLEDLTHEVVQVLRKGGHESCSS.

One can recognise an ABC transporter domain in the interval 3–246 (ITFQKVEHRY…ADELEKIGVD (244 aa)). 40 to 47 (GHTGSGKS) lines the ATP pocket.

It belongs to the ABC transporter superfamily. Energy-coupling factor EcfA family. In terms of assembly, forms a stable energy-coupling factor (ECF) transporter complex composed of 2 membrane-embedded substrate-binding proteins (S component), 2 ATP-binding proteins (A component) and 2 transmembrane proteins (T component).

The protein resides in the cell membrane. ATP-binding (A) component of a common energy-coupling factor (ECF) ABC-transporter complex. Unlike classic ABC transporters this ECF transporter provides the energy necessary to transport a number of different substrates. In Bacillus cereus (strain ZK / E33L), this protein is Energy-coupling factor transporter ATP-binding protein EcfA2.